A 443-amino-acid chain; its full sequence is Probable ribonuclease FAU-1 (443 aa).

Belongs to the FAU-1 family.

Probable RNase involved in rRNA stability through maturation and/or degradation of precursor rRNAs. Binds to RNA in loop regions with AU-rich sequences. This Pyrobaculum aerophilum (strain ATCC 51768 / DSM 7523 / JCM 9630 / CIP 104966 / NBRC 100827 / IM2) protein is Probable ribonuclease FAU-1.